The primary structure comprises 153 residues: UPF0756 membrane protein LSL_0936 (153 aa).

5 helical membrane passes run 4–24 (WIFLGLILLIAYLGKNSSLLI), 26–46 (GAVVIVIKLFPFLSQKLYPVI), 51–71 (INWGVTIISVAILIPIATGQI), 86–106 (WIAVVCGILVAILSKHGVNLL), and 116–136 (LVIGTIIGVVFLKGVAAGPVI).

Belongs to the UPF0756 family.

It is found in the cell membrane. In Ligilactobacillus salivarius (strain UCC118) (Lactobacillus salivarius), this protein is UPF0756 membrane protein LSL_0936.